Consider the following 285-residue polypeptide: MNAHQSSLPAQTKRTAHIAFSKAPSGASYVSRQEVGYPFHLGRTLTLPQDPPGMAAVYLQSCSGGLFAGEQLHLHLHAGPGTQVHVSTGAATVAHSMLEQSARQTVTLVAEADALLEYLPMATILFPQTRLHSQVNVTLHPGARVLLCDAFCLHTPHGSEGLPDFYRADLQVYSPAGKLLAGDRLAITGADLQRRLPGVSGQRQALATFMLVGQGLPIEDLKRTLRETLRDVADSYQGVSALPNDCGVSVRVMSADAVALRNALHLAWACVRQQLTGLAPRVRRK.

This sequence belongs to the UreD family. In terms of assembly, ureD, UreF and UreG form a complex that acts as a GTP-hydrolysis-dependent molecular chaperone, activating the urease apoprotein by helping to assemble the nickel containing metallocenter of UreC. The UreE protein probably delivers the nickel.

It localises to the cytoplasm. Its function is as follows. Required for maturation of urease via the functional incorporation of the urease nickel metallocenter. In Pseudomonas syringae pv. syringae (strain B728a), this protein is Urease accessory protein UreD 1.